The chain runs to 240 residues: Lipoprotein signal peptidase (240 aa).

Helical transmembrane passes span 38–58 (LIWK…TSFL), 73–93 (LIPG…FGTL), 98–118 (PSLV…VLLF), and 120–140 (SNYL…SNII). Catalysis depends on residues Asp-162 and Asp-179. A helical transmembrane segment spans residues 177–197 (FPDTFVIIGMIFVGIQIIISF).

This sequence belongs to the peptidase A8 family.

The protein localises to the cell membrane. The enzyme catalyses Release of signal peptides from bacterial membrane prolipoproteins. Hydrolyzes -Xaa-Yaa-Zaa-|-(S,diacylglyceryl)Cys-, in which Xaa is hydrophobic (preferably Leu), and Yaa (Ala or Ser) and Zaa (Gly or Ala) have small, neutral side chains.. It participates in protein modification; lipoprotein biosynthesis (signal peptide cleavage). This protein specifically catalyzes the removal of signal peptides from prolipoproteins. The protein is Lipoprotein signal peptidase of Malacoplasma penetrans (strain HF-2) (Mycoplasma penetrans).